The following is a 95-amino-acid chain: Complement inhibitor RaCI5 (95 aa).

The first 21 residues, Met-1–Ser-21, serve as a signal peptide directing secretion. Disulfide bonds link Cys-35–Cys-59, Cys-40–Cys-61, and Cys-55–Cys-76.

The protein belongs to the RaCI family. As to expression, expressed in salivary glands.

The protein resides in the secreted. Functionally, complement inhibitor. Prevents complement-mediated C5 activation by binding to C5. Binds C5 at a different binding site than the other tick complement inhibitors OmCI and CirpT1, and the drug eculizumab. In Rhipicephalus appendiculatus (Brown ear tick), this protein is Complement inhibitor RaCI5.